Consider the following 250-residue polypeptide: DNA repair protein RecO (250 aa).

It belongs to the RecO family.

Functionally, involved in DNA repair and RecF pathway recombination. The sequence is that of DNA repair protein RecO from Syntrophomonas wolfei subsp. wolfei (strain DSM 2245B / Goettingen).